Consider the following 286-residue polypeptide: S-adenosylmethionine-dependent methyltransferase UmaA (286 aa).

S-adenosyl-L-methionine contacts are provided by residues 32-33, 67-75, 93-98, and 122-123; these read YT, LLDIGCGWG, TLSRNQ, and WD. The active site involves C268.

Belongs to the CFA/CMAS family.

It is found in the cytoplasm. Methyltransferase that modifies short-chain fatty acids. In vitro, catalyzes the transfer of the methyl group from S-adenosyl-L-methionine (SAM) to the double bond of phospholipid-linked oleic acid to produce tuberculostearic acid (10-methylstearic-acid or TSA). In Mycobacterium tuberculosis (strain ATCC 25618 / H37Rv), this protein is S-adenosylmethionine-dependent methyltransferase UmaA.